The chain runs to 130 residues: Small ribosomal subunit protein uS9 (130 aa).

The protein belongs to the universal ribosomal protein uS9 family.

In Cupriavidus taiwanensis (strain DSM 17343 / BCRC 17206 / CCUG 44338 / CIP 107171 / LMG 19424 / R1) (Ralstonia taiwanensis (strain LMG 19424)), this protein is Small ribosomal subunit protein uS9.